A 130-amino-acid polypeptide reads, in one-letter code: Small ribosomal subunit protein uS11 (130 aa).

Belongs to the universal ribosomal protein uS11 family. As to quaternary structure, part of the 30S ribosomal subunit. Interacts with proteins S7 and S18. Binds to IF-3.

In terms of biological role, located on the platform of the 30S subunit, it bridges several disparate RNA helices of the 16S rRNA. Forms part of the Shine-Dalgarno cleft in the 70S ribosome. In Sulfurimonas denitrificans (strain ATCC 33889 / DSM 1251) (Thiomicrospira denitrificans (strain ATCC 33889 / DSM 1251)), this protein is Small ribosomal subunit protein uS11.